A 224-amino-acid polypeptide reads, in one-letter code: Putative homeobox protein R749 (224 aa).

A disordered region spans residues 139-162 (KTKTIKKSTSEKKTSPKKKTTSQQ). The segment at residues 161 to 220 (QQIKRVRLSDEERNILESQYSKNNFPSPEIRDELAKKIGKTPRQVQIWFQNKRCKDRKNL) is a DNA-binding region (homeobox).

It is found in the host nucleus. The chain is Putative homeobox protein R749 from Acanthamoeba polyphaga mimivirus (APMV).